The chain runs to 500 residues: Cysteine-rich secretory protein LCCL domain-containing 1 (500 aa).

The signal sequence occupies residues 1-23 (MKCTAREWLRVTTVLFMARAIPA). An SCP domain is found at 66-206 (LDLHNKLRSQ…PKAVYLVCNY (141 aa)). Positions 254 to 280 (EETNEIERQQSQVHDTHVRTRSDDSSR) are enriched in basic and acidic residues. A disordered region spans residues 254-281 (EETNEIERQQSQVHDTHVRTRSDDSSRN). LCCL domains follow at residues 289–384 (MSQI…ANSF) and 390–492 (TVQA…PGGK). Cystine bridges form between C295–C313, C317–C337, C396–C418, and C422–C445.

It belongs to the CRISP family.

Its subcellular location is the secreted. In Homo sapiens (Human), this protein is Cysteine-rich secretory protein LCCL domain-containing 1 (CRISPLD1).